We begin with the raw amino-acid sequence, 138 residues long: Nucleoside diphosphate kinase (138 aa).

ATP-binding residues include lysine 10, phenylalanine 58, arginine 86, threonine 92, arginine 103, and asparagine 113. The active-site Pros-phosphohistidine intermediate is the histidine 116.

It belongs to the NDK family. Homotetramer. It depends on Mg(2+) as a cofactor.

It localises to the cytoplasm. It carries out the reaction a 2'-deoxyribonucleoside 5'-diphosphate + ATP = a 2'-deoxyribonucleoside 5'-triphosphate + ADP. The enzyme catalyses a ribonucleoside 5'-diphosphate + ATP = a ribonucleoside 5'-triphosphate + ADP. Major role in the synthesis of nucleoside triphosphates other than ATP. The ATP gamma phosphate is transferred to the NDP beta phosphate via a ping-pong mechanism, using a phosphorylated active-site intermediate. This Actinobacillus pleuropneumoniae serotype 7 (strain AP76) protein is Nucleoside diphosphate kinase.